Here is a 370-residue protein sequence, read N- to C-terminus: Anthranilate phosphoribosyltransferase (370 aa).

Residues 1 to 27 (MALSAEGSSGGSRGGSPKAEAASVPSW) form a disordered region. Residues glycine 107, 110-111 (GD), threonine 115, 117-120 (NLST), 135-143 (KHGNRAASS), and glycine 147 each bind 5-phospho-alpha-D-ribose 1-diphosphate. Glycine 107 is a binding site for anthranilate. Serine 119 serves as a coordination point for Mg(2+). Asparagine 138 lines the anthranilate pocket. Arginine 193 is an anthranilate binding site. Mg(2+)-binding residues include aspartate 251 and glutamate 252.

The protein belongs to the anthranilate phosphoribosyltransferase family. As to quaternary structure, homodimer. Mg(2+) serves as cofactor.

It catalyses the reaction N-(5-phospho-beta-D-ribosyl)anthranilate + diphosphate = 5-phospho-alpha-D-ribose 1-diphosphate + anthranilate. The protein operates within amino-acid biosynthesis; L-tryptophan biosynthesis; L-tryptophan from chorismate: step 2/5. Its function is as follows. Catalyzes the transfer of the phosphoribosyl group of 5-phosphorylribose-1-pyrophosphate (PRPP) to anthranilate to yield N-(5'-phosphoribosyl)-anthranilate (PRA). In Mycobacterium bovis (strain ATCC BAA-935 / AF2122/97), this protein is Anthranilate phosphoribosyltransferase.